The chain runs to 225 residues: uncharacterized protein (225 aa).

The helical transmembrane segment at 2–22 threads the bilayer; it reads TIFYLVFIAVIIIIILYVLYL. N-linked (GlcNAc...) asparagine; by host glycosylation is present at Asn-73. Residues 114 to 146 adopt a coiled-coil conformation; sequence DYEDNYFNSNWNLKQLKNQLENLLREKNYKMVL. Asn-222 carries an N-linked (GlcNAc...) asparagine; by host glycan.

It localises to the membrane. This is an uncharacterized protein from Acanthamoeba polyphaga (Amoeba).